The following is a 427-amino-acid chain: MKTQIQAIHAREILDSRGNPTVEVDVTLECGAMGRASVPSGASTGAHEAVELRDKDTQRYSGKGVLKAVSNVNTEILESVRGMNAIDQEQIDHLMIKLDGTSDKSRLGGNAILGVSLAVARAAASALNLPLFQYLGGEQAARMPVPMFNILNGGVHANWQGPDFQEFMIAPTGAGSFKEALRWGSEVYHELKAVLKDAGYSTAVGDEGGFAPALKKNSDAIELIIKAIERAGYTPGSQIEIAIDPASSGFYENGLYHLRSEGRKVDAQELINLYSSWVDKYPIAVLEDGLAEDDWSGWKLLNAALGDRIELVGDDLFVTNVERIQRGITENVANAVLIKPNQIGTLTETKAAIEMAYGANWGAMVSHRSGETVDSSIADLTVAMGTGHLKTGAPCRGERVEKYNQFLRIEEDLGSRAFYAGHDAFVR.

Position 165 (Gln-165) interacts with (2R)-2-phosphoglycerate. Glu-207 acts as the Proton donor in catalysis. Mg(2+) contacts are provided by Asp-244, Glu-287, and Asp-314. The (2R)-2-phosphoglycerate site is built by Lys-339, Arg-368, Ser-369, and Lys-390. Lys-339 serves as the catalytic Proton acceptor.

The protein belongs to the enolase family. Component of the RNA degradosome, a multiprotein complex involved in RNA processing and mRNA degradation. Requires Mg(2+) as cofactor.

It localises to the cytoplasm. The protein localises to the secreted. The protein resides in the cell surface. The catalysed reaction is (2R)-2-phosphoglycerate = phosphoenolpyruvate + H2O. It functions in the pathway carbohydrate degradation; glycolysis; pyruvate from D-glyceraldehyde 3-phosphate: step 4/5. Functionally, catalyzes the reversible conversion of 2-phosphoglycerate (2-PG) into phosphoenolpyruvate (PEP). It is essential for the degradation of carbohydrates via glycolysis. The sequence is that of Enolase 2 from Pseudomonas syringae pv. tomato (strain ATCC BAA-871 / DC3000).